The chain runs to 388 residues: Succinate--CoA ligase [ADP-forming] subunit beta (388 aa).

Residues 9–244 (KEIFRSMGVA…LEEEDPKEIE (236 aa)) enclose the ATP-grasp domain. Residues lysine 46, 53–55 (GRG), glutamate 99, cysteine 102, and glutamate 107 each bind ATP. Residues asparagine 199 and aspartate 213 each coordinate Mg(2+). Substrate is bound by residues asparagine 264 and 321-323 (GIM).

The protein belongs to the succinate/malate CoA ligase beta subunit family. Heterotetramer of two alpha and two beta subunits. The cofactor is Mg(2+).

The catalysed reaction is succinate + ATP + CoA = succinyl-CoA + ADP + phosphate. It catalyses the reaction GTP + succinate + CoA = succinyl-CoA + GDP + phosphate. It participates in carbohydrate metabolism; tricarboxylic acid cycle; succinate from succinyl-CoA (ligase route): step 1/1. Functionally, succinyl-CoA synthetase functions in the citric acid cycle (TCA), coupling the hydrolysis of succinyl-CoA to the synthesis of either ATP or GTP and thus represents the only step of substrate-level phosphorylation in the TCA. The beta subunit provides nucleotide specificity of the enzyme and binds the substrate succinate, while the binding sites for coenzyme A and phosphate are found in the alpha subunit. This Staphylococcus aureus (strain Mu3 / ATCC 700698) protein is Succinate--CoA ligase [ADP-forming] subunit beta.